Here is a 116-residue protein sequence, read N- to C-terminus: Large ribosomal subunit protein bL20 (116 aa).

This sequence belongs to the bacterial ribosomal protein bL20 family.

Binds directly to 23S ribosomal RNA and is necessary for the in vitro assembly process of the 50S ribosomal subunit. It is not involved in the protein synthesizing functions of that subunit. The polypeptide is Large ribosomal subunit protein bL20 (Desulforapulum autotrophicum (strain ATCC 43914 / DSM 3382 / VKM B-1955 / HRM2) (Desulfobacterium autotrophicum)).